A 58-amino-acid chain; its full sequence is ATP synthase F(0) complex subunit k, mitochondrial (58 aa).

Lysine 16 and lysine 17 each carry N6-acetyllysine; partial. The chain crosses the membrane as a helical span at residues 23–45; it reads TLTGRMNCVLATYGSIALIVLYF.

As to quaternary structure, component of the ATP synthase complex composed at least of ATP5F1A/subunit alpha, ATP5F1B/subunit beta, ATP5MC1/subunit c (homooctomer), MT-ATP6/subunit a, MT-ATP8/subunit 8, ATP5ME/subunit e, ATP5MF/subunit f, ATP5MG/subunit g, ATP5MK/subunit k, ATP5MJ/subunit j, ATP5F1C/subunit gamma, ATP5F1D/subunit delta, ATP5F1E/subunit epsilon, ATP5PF/subunit F6, ATP5PB/subunit b, ATP5PD/subunit d, ATP5PO/subunit OSCP. ATP synthase complex consists of a soluble F(1) head domain (subunits alpha(3) and beta(3)) - the catalytic core - and a membrane F(0) domain - the membrane proton channel (subunits c, a, 8, e, f, g, k and j). These two domains are linked by a central stalk (subunits gamma, delta, and epsilon) rotating inside the F1 region and a stationary peripheral stalk (subunits F6, b, d, and OSCP). The ATP synthase complex/complex V exists as a monomeric and a dimeric supercomplex that helps shape mitochondrial cristae to optimize proton flow.

It localises to the mitochondrion membrane. Subunit k, of the mitochondrial membrane ATP synthase complex (F(1)F(0) ATP synthase or Complex V) that produces ATP from ADP in the presence of a proton gradient across the membrane which is generated by electron transport complexes of the respiratory chain. ATP synthase complex consist of a soluble F(1) head domain - the catalytic core - and a membrane F(1) domain - the membrane proton channel. These two domains are linked by a central stalk rotating inside the F(1) region and a stationary peripheral stalk. During catalysis, ATP synthesis in the catalytic domain of F(1) is coupled via a rotary mechanism of the central stalk subunits to proton translocation. In vivo, can only synthesize ATP although its ATP hydrolase activity can be activated artificially in vitro. Part of the complex F(0) domain. Required for dimerization of the ATP synthase complex and as such regulates ATP synthesis in the mitochondria. This Bos taurus (Bovine) protein is ATP synthase F(0) complex subunit k, mitochondrial.